The following is a 103-amino-acid chain: MKKEKLAMKFKSFDHKLVDDAVKKVLILASKEKIDYSGPIPLPTKREIFTILRSVHVNKKSREQFERRTYKRFIVFNNPGPKFVEILKRTEMPAGVEVEFKVK.

This sequence belongs to the universal ribosomal protein uS10 family. Part of the 30S ribosomal subunit.

Functionally, involved in the binding of tRNA to the ribosomes. The chain is Small ribosomal subunit protein uS10 from Mycoplasmopsis pulmonis (strain UAB CTIP) (Mycoplasma pulmonis).